Consider the following 520-residue polypeptide: GMP synthase [glutamine-hydrolyzing] (520 aa).

In terms of domain architecture, Glutamine amidotransferase type-1 spans 9-202 (TVLIVDFGSQ…VHNIAGIEGD (194 aa)). Cysteine 86 (nucleophile) is an active-site residue. Active-site residues include histidine 176 and glutamate 178. The GMPS ATP-PPase domain occupies 203–395 (WTMRAYREHA…LGLPESFIGR (193 aa)). An ATP-binding site is contributed by 230–236 (SGGVDSS).

In terms of assembly, homodimer.

The enzyme catalyses XMP + L-glutamine + ATP + H2O = GMP + L-glutamate + AMP + diphosphate + 2 H(+). It functions in the pathway purine metabolism; GMP biosynthesis; GMP from XMP (L-Gln route): step 1/1. Its function is as follows. Catalyzes the synthesis of GMP from XMP. In Mesorhizobium japonicum (strain LMG 29417 / CECT 9101 / MAFF 303099) (Mesorhizobium loti (strain MAFF 303099)), this protein is GMP synthase [glutamine-hydrolyzing].